Here is a 144-residue protein sequence, read N- to C-terminus: Urease accessory protein UreE (144 aa).

Belongs to the UreE family.

Its subcellular location is the cytoplasm. Its function is as follows. Involved in urease metallocenter assembly. Binds nickel. Probably functions as a nickel donor during metallocenter assembly. This chain is Urease accessory protein UreE, found in Thermosynechococcus vestitus (strain NIES-2133 / IAM M-273 / BP-1).